The following is a 107-amino-acid chain: Flagellar transcriptional regulator FlhD (107 aa).

Belongs to the FlhD family. In terms of assembly, homodimer; disulfide-linked. Forms a heterohexamer composed of two FlhC and four FlhD subunits. Each FlhC binds a FlhD dimer, forming a heterotrimer, and a hexamer assembles by dimerization of two heterotrimers.

The protein resides in the cytoplasm. Its function is as follows. Functions in complex with FlhC as a master transcriptional regulator that regulates transcription of several flagellar and non-flagellar operons by binding to their promoter region. Activates expression of class 2 flagellar genes, including fliA, which is a flagellum-specific sigma factor that turns on the class 3 genes. Also regulates genes whose products function in a variety of physiological pathways. The protein is Flagellar transcriptional regulator FlhD of Bordetella bronchiseptica (strain ATCC BAA-588 / NCTC 13252 / RB50) (Alcaligenes bronchisepticus).